The primary structure comprises 372 residues: DNA replication and repair protein RecF (372 aa).

ATP is bound at residue Gly30–Thr37.

It belongs to the RecF family.

Its subcellular location is the cytoplasm. The RecF protein is involved in DNA metabolism; it is required for DNA replication and normal SOS inducibility. RecF binds preferentially to single-stranded, linear DNA. It also seems to bind ATP. This chain is DNA replication and repair protein RecF, found in Geobacillus kaustophilus (strain HTA426).